The chain runs to 400 residues: Acetate kinase (400 aa).

Asparagine 7 is a Mg(2+) binding site. Lysine 14 contributes to the ATP binding site. Arginine 90 is a binding site for substrate. Catalysis depends on aspartate 147, which acts as the Proton donor/acceptor. ATP-binding positions include 207-211 (HLGNG), 282-284 (DFR), and 331-335 (GIGEN). Residue glutamate 384 coordinates Mg(2+).

Belongs to the acetokinase family. Homodimer. Mg(2+) is required as a cofactor. Mn(2+) serves as cofactor.

It localises to the cytoplasm. It catalyses the reaction acetate + ATP = acetyl phosphate + ADP. The protein operates within metabolic intermediate biosynthesis; acetyl-CoA biosynthesis; acetyl-CoA from acetate: step 1/2. Catalyzes the formation of acetyl phosphate from acetate and ATP. Can also catalyze the reverse reaction. The polypeptide is Acetate kinase (Thermoanaerobacterium thermosaccharolyticum (strain ATCC 7956 / DSM 571 / NCIMB 9385 / NCA 3814 / NCTC 13789 / WDCM 00135 / 2032) (Clostridium thermosaccharolyticum)).